Consider the following 550-residue polypeptide: Chaperonin GroEL (550 aa).

Residues 29–32, K50, 86–90, G416, and D498 each bind ATP; these read TAGP and DGTTT.

This sequence belongs to the chaperonin (HSP60) family. Forms a cylinder of 14 subunits composed of two heptameric rings stacked back-to-back. Interacts with the co-chaperonin GroES.

It is found in the cytoplasm. The catalysed reaction is ATP + H2O + a folded polypeptide = ADP + phosphate + an unfolded polypeptide.. Together with its co-chaperonin GroES, plays an essential role in assisting protein folding. The GroEL-GroES system forms a nano-cage that allows encapsulation of the non-native substrate proteins and provides a physical environment optimized to promote and accelerate protein folding. The polypeptide is Chaperonin GroEL (Anaplasma phagocytophilum (strain HZ)).